The following is a 251-amino-acid chain: Protein PBMUCL2 (251 aa).

The N-terminal stretch at Met-1–Gly-22 is a signal peptide. Disordered stretches follow at residues Trp-36–Ser-55 and Leu-65–Leu-251. The span at Lys-72–Asp-87 shows a compositional bias: basic and acidic residues. N-linked (GlcNAc...) asparagine glycosylation occurs at Asn-120. A compositionally biased stretch (polar residues) spans Thr-150–Phe-164. The 15 X 11 AA approximate repeats stretch occupies residues Ser-153 to Leu-251. Positions Glu-241–Leu-251 are enriched in basic and acidic residues.

Detected in the brain, lung, spleen, thymus and prostate.

The protein localises to the secreted. The sequence is that of Protein PBMUCL2 (HCG22) from Homo sapiens (Human).